The chain runs to 130 residues: Large ribosomal subunit protein bL12 (130 aa).

It belongs to the bacterial ribosomal protein bL12 family. As to quaternary structure, homodimer. Part of the ribosomal stalk of the 50S ribosomal subunit. Forms a multimeric L10(L12)X complex, where L10 forms an elongated spine to which 2 to 4 L12 dimers bind in a sequential fashion. Binds GTP-bound translation factors.

In terms of biological role, forms part of the ribosomal stalk which helps the ribosome interact with GTP-bound translation factors. Is thus essential for accurate translation. This Mycobacterium bovis (strain ATCC BAA-935 / AF2122/97) protein is Large ribosomal subunit protein bL12.